Consider the following 500-residue polypeptide: Probable cytosol aminopeptidase (500 aa).

Residues Lys-264 and Asp-269 each contribute to the Mn(2+) site. Lys-276 is an active-site residue. Residues Asp-287, Asp-346, and Glu-348 each coordinate Mn(2+). Arg-350 is an active-site residue.

The protein belongs to the peptidase M17 family. Requires Mn(2+) as cofactor.

The protein resides in the cytoplasm. The catalysed reaction is Release of an N-terminal amino acid, Xaa-|-Yaa-, in which Xaa is preferably Leu, but may be other amino acids including Pro although not Arg or Lys, and Yaa may be Pro. Amino acid amides and methyl esters are also readily hydrolyzed, but rates on arylamides are exceedingly low.. It catalyses the reaction Release of an N-terminal amino acid, preferentially leucine, but not glutamic or aspartic acids.. Its function is as follows. Presumably involved in the processing and regular turnover of intracellular proteins. Catalyzes the removal of unsubstituted N-terminal amino acids from various peptides. This chain is Probable cytosol aminopeptidase, found in Chlamydia abortus (strain DSM 27085 / S26/3) (Chlamydophila abortus).